A 396-amino-acid chain; its full sequence is Elongation factor Tu 1 (396 aa).

Residues 10–206 form the tr-type G domain; it reads KPHVNVGTIG…ALDTYIPTPK (197 aa). Positions 19–26 are G1; that stretch reads GHVDHGKT. 19-26 serves as a coordination point for GTP; that stretch reads GHVDHGKT. Position 26 (Thr-26) interacts with Mg(2+). Residues 60–64 form a G2 region; sequence GITIS. The tract at residues 81–84 is G3; that stretch reads DCPG. GTP-binding positions include 81–85 and 136–139; these read DCPGH and NKAD. Positions 136-139 are G4; the sequence is NKAD. The tract at residues 174 to 176 is G5; sequence SAL.

The protein belongs to the TRAFAC class translation factor GTPase superfamily. Classic translation factor GTPase family. EF-Tu/EF-1A subfamily. In terms of assembly, monomer.

Its subcellular location is the cytoplasm. It carries out the reaction GTP + H2O = GDP + phosphate + H(+). Functionally, GTP hydrolase that promotes the GTP-dependent binding of aminoacyl-tRNA to the A-site of ribosomes during protein biosynthesis. In Ruthia magnifica subsp. Calyptogena magnifica, this protein is Elongation factor Tu 1.